The chain runs to 306 residues: MSVFAPIARELDIFFGFSWRDWSTTIIPGSIFAVGAMRDLPPATLVKNYLFLVTWLTPYIYFFNLSNQITGVDEDKINKPDRPIPSGKVTLQGAQRRWIAAFSTFLGIALYQPEFLPETLCWIATVAFLCLTSYGDHWFGKNCVAMTTGTWALLSASWKAIAPATPTSDAWVYAVSVWAGLITHIQDLRDMEGDKAVGRKTLPLVFGDMGSRLIITFFALPAACWVLSLAGIFQLAPVTLGALHAILGYRVLRQGGPRYDHKTYMFYTYIFCLILAFCALDGLGLKINAESLRALLATTGVSLKEL.

Helical transmembrane passes span isoleucine 13–alanine 33 and alanine 43–phenylalanine 63. An N-linked (GlcNAc...) asparagine glycan is attached at asparagine 64. A run of 4 helical transmembrane segments spans residues phenylalanine 115–glycine 135, isoleucine 161–leucine 181, leucine 213–phenylalanine 233, and methionine 265–leucine 285.

It belongs to the UbiA prenyltransferase family. Mg(2+) is required as a cofactor.

Its subcellular location is the membrane. It carries out the reaction (2E,6E,10E)-geranylgeranyl diphosphate = (-)-cyatha-3,12-diene + diphosphate. It functions in the pathway secondary metabolite biosynthesis. Its activity is regulated as follows. EDTA completely blocks the reaction. Functionally, diterpene cyclase; part of the gene cluster that mediates the biosynthesis of erinacines, cyathane-xylosides that show unique biological activities, including leishmanicidal activity, stimulating activity for nerve growth-factor synthesis, and agonistic activity toward the kappa opioid receptor. Within the pathway, eriG acts as a diterpene cyclase that converts geranylgeranyl diphosphate (GGPP) into cyatha-3,12-diene. EriG is unable to use geranyl diphosphate (GPP) or farnesyl diphosphate (FPP) as substrates. The first step of the erinacines biosynthesis pathway is catalyzed by the geranylgeranyl diphosphate (GGPP) synthase eriE via conversion of farnesyl pyrophosphate and isopentyl pyrophosphate into geranylgeranyl pyrophosphate (GGPP). GGPP is then substrate of the diterpene cyclase eriG for the production of cyatha-3,12-diene. The cytochrome P450 monooxygenase eriI then hydroxylates cyatha-3,12-diene at C-14 of the seven-membered ring to produce erinacol, which is further hydroxylated at C-15 by the cytochrome P450 monooxygenase eriC to yield cyathadiol. The cytochrome P450 monooxygenase eriA then catalyzes C-11 hydroxylation in the presence of the short chain dehydrogenase/reductase (SDR) eriH, which leads to the production of cyathatriol. The acetyltransferase eriL converts cyathatriol into 11-O-acetyl-cyathatriol. The SDR eriH catalyzes further oxidation of 11-O-acetyl-cyathatriol into 1-O-acetylcyathin A3. Finally, the glycosyl transferase eriJ tranfers xylose from UDP-xylose onto C-14 of 11-O-acetyl-cyathatriol to form eracine Q. EriJ is also able to convert 11-O-acetyl-cyathatriol to eracine Q2 by using UDP-D-glucose as cosubstrate, but at a lower rate. The polypeptide is Diterpene cyclase eriG (Hericium erinaceus (Lion's mane mushroom)).